The primary structure comprises 268 residues: Microtubule-associated protein RP/EB family member 1 (268 aa).

A2 is modified (N-acetylalanine). A Calponin-homology (CH) domain is found at 14–116 (NLSRHDMLAW…FVQWFKKFFD (103 aa)). K66 carries the post-translational modification N6-crotonyllysine. The residue at position 124 (Y124) is a Phosphotyrosine. An interaction with MTUS2/TIP150 region spans residues 124-268 (YDPVAARQGQ…GGPQEEQEEY (145 aa)). The disordered stretch occupies residues 146–180 (LSKPKKPLGSSTAAPQRPIATQRTTAAPKAGPGMV). Positions 154–170 (GSSTAAPQRPIATQRTT) are enriched in polar residues. The residue at position 155 (S155) is a Phosphoserine. The region spanning 185-255 (GVGNGDDEAA…LYATDEGFVI (71 aa)) is the EB1 C-terminal domain. The segment at 206 to 211 (TVEDLE) is interaction with APC. The DCTN1-binding stretch occupies residues 208-268 (EDLEKERDFY…GGPQEEQEEY (61 aa)). Residue K220 is modified to N6-acetyllysine. The APC-binding stretch occupies residues 220-242 (KLRNIELICQENEGENDPVLQRI). An interaction with SKA1 region spans residues 232 to 255 (EGENDPVLQRIVDILYATDEGFVI).

Belongs to the MAPRE family. Homodimer. Heterodimer with MAPRE3. Interacts (via C-terminal residues 206-211) with APC (via C-terminal residues 2674-2845); the interaction inhibits association with and bundling of F-actin. Interacts with DCTN1, DIAPH1 and DIAPH2. Interacts with DCTN2, TERF1 and dynein intermediate chain. Interacts with CLASP2, DST, KIF2C and STIM1; probably required for their targeting to the growing microtubule plus ends. Interacts with MTUS2; interaction is direct and probably targets MTUS2 to microtubules. Interacts (via C-terminus) with SKA1 (via SXIP motif); the interaction is direct and stabilizes the kinetochore-microtubule attachment of the SKA1 complex. Interacts with APC2. Interacts with CLASP1. Interacts (via C-terminus) with CLIP1. Interacts with SLAIN2 and SLAIN1. Interacts with MACF1. Interacts with KIF18B; this interaction is required for efficient accumulation of KIF18B at microtubule plus ends. Interacts with MISP. Interacts with RABL2/RABL2A; binds preferentially to GTP-bound RABL2. Interacts with KCNAB2. Interacts with KNSTRN. Interacts with NCKAP5L. Interacts with AKAP9. Interacts with PDE4DIP isoform 2/MMG8/SMYLE; this interaction is required for its recruitment to the Golgi apparatus. May form a pericentrosomal complex with AKAP9, CDK5RAP2 and PDE4DIP isoform 2/MMG8/SMYLE; within this complex, MAPRE1 binding to CDK5RAP2 may be mediated by PDE4DIP. Contrary to other mammalian species, does not interact with CDK5RAP2, possibly due to the lack of conservation of the MAPRE1-binding motif in mouse CDK5RAP2. Interacts with AKNA. Interacts with GAS2L1, GAS2L2, and GAS2L3. Interacts with RARRES1 and AGBL2. Acetylation at Lys-220 by KAT2B/PCAF promotes dynamic kinetochore-microtubule interactions in early mitosis. Post-translationally, crotonylated by KAT5 during mitosis, promoting astral microtubule plasticity and dynamic connection between astral microtubules and the cortex during mitotic chromosome segregation, thereby ensuring accurate spindle positioning in mitosis. Decrotonylated by HDAC3. In terms of tissue distribution, expressed within the midpiece of sperm tail (at protein level).

Its subcellular location is the cytoplasm. The protein resides in the cytoskeleton. The protein localises to the microtubule organizing center. It is found in the centrosome. It localises to the spindle. Its subcellular location is the spindle pole. Functionally, plus-end tracking protein (+TIP) that binds to the plus-end of microtubules and regulates the dynamics of the microtubule cytoskeleton. Recruits other +TIP proteins to microtubules by binding to a conserved Ser-X-Leu-Pro (SXLP) motif in their polypeptide chains. Promotes cytoplasmic microtubule nucleation and elongation. Involved in mitotic spindle positioning by stabilizing microtubules and promoting dynamic connection between astral microtubules and the cortex during mitotic chromosome segregation. Assists chromosome alignment in metaphase by recruiting the SKA complex to the spindle and stabilizing its interactions with microtubule bundles (K-fibers). Also acts as a regulator of minus-end microtubule organization: interacts with the complex formed by AKAP9 and PDE4DIP, leading to recruit CAMSAP2 to the Golgi apparatus, thereby tethering non-centrosomal minus-end microtubules to the Golgi, an important step for polarized cell movement. Promotes elongation of CAMSAP2-decorated microtubule stretches on the minus-end of microtubules. Acts as a regulator of autophagosome transport via interaction with CAMSAP2. Functions downstream of Rho GTPases and DIAPH1 in stable microtubule formation. May play a role in cell migration. The sequence is that of Microtubule-associated protein RP/EB family member 1 (Mapre1) from Mus musculus (Mouse).